A 550-amino-acid polypeptide reads, in one-letter code: Acidic amino acid decarboxylase GADL1 (550 aa).

Lys-362 carries the post-translational modification N6-(pyridoxal phosphate)lysine.

This sequence belongs to the group II decarboxylase family. As to quaternary structure, homodimer. Pyridoxal 5'-phosphate serves as cofactor. Expressed in skeletal muscles and kidney (at protein level). Expressed in skeletal muscle and weakly in brain. Not expressed in liver or kidney. Expressed in brain, olfactory bulb, liver, muscle and kidney with the highest expression in olfactory bulb and almost not detected in liver (at protein level).

The enzyme catalyses L-aspartate + H(+) = beta-alanine + CO2. The catalysed reaction is 3-sulfino-L-alanine + H(+) = hypotaurine + CO2. It catalyses the reaction L-cysteate + H(+) = taurine + CO2. With respect to regulation, activated weakly by 0.2-0.4 mM Li(+). Inhibited by bis-carboxymethyl-trithiocarbonate, ethylxanthogenacetic acid and 2,5-disulfoaniline. Functionally, catalyzes the decarboxylation of L-aspartate, 3-sulfino-L-alanine (cysteine sulfinic acid), and L-cysteate to beta-alanine, hypotaurine and taurine, respectively. The preferred substrate is L-aspartate. Does not exhibit any decarboxylation activity toward glutamate. This chain is Acidic amino acid decarboxylase GADL1, found in Mus musculus (Mouse).